The primary structure comprises 208 residues: FMN-dependent NADH:quinone oxidoreductase (208 aa).

FMN-binding positions include S9, 15 to 17 (SVS), 96 to 99 (MYNF), and 140 to 143 (TRGG).

Belongs to the azoreductase type 1 family. As to quaternary structure, homodimer. FMN is required as a cofactor.

It catalyses the reaction 2 a quinone + NADH + H(+) = 2 a 1,4-benzosemiquinone + NAD(+). The enzyme catalyses N,N-dimethyl-1,4-phenylenediamine + anthranilate + 2 NAD(+) = 2-(4-dimethylaminophenyl)diazenylbenzoate + 2 NADH + 2 H(+). Functionally, quinone reductase that provides resistance to thiol-specific stress caused by electrophilic quinones. Its function is as follows. Also exhibits azoreductase activity. Catalyzes the reductive cleavage of the azo bond in aromatic azo compounds to the corresponding amines. This is FMN-dependent NADH:quinone oxidoreductase from Azospirillum brasilense.